A 5255-amino-acid polypeptide reads, in one-letter code: SCO-spondin (5255 aa).

Positions 1 to 18 (MGIVATVLLWVVTEAARG) are cleaved as a signal peptide. The 93-residue stretch at 19–111 (RWCERTEQVT…ACCAGWSGPH (93 aa)) folds into the EMI domain. N-linked (GlcNAc...) asparagine glycosylation is found at N97, N136, N156, and N255. The VWFD 1 domain occupies 192–358 (ASCTVWAGSR…PDANPELSCS (167 aa)). Disulfide bonds link C194–C317 and C216–C357. Residues 453–508 (CGHGQRYSDCVSSCPASCMAAGTAEEGHCRDDCASGCECTPGLLLDRGACIPQSAC) form the TIL 1 domain. One can recognise a VWFC 1 domain in the interval 508–601 (CPCLHRGHIY…CGGHQPLSCL (94 aa)). A VWFD 2 domain is found at 546–717 (AECAVLGDLH…NKYRVSTDCP (172 aa)). 3 cysteine pairs are disulfide-bonded: C548–C681, C570–C716, and C592–C600. Residue N801 is glycosylated (N-linked (GlcNAc...) asparagine). The 60-residue stretch at 809–868 (CRGGQVYQECSSPCGRTCADLRLDGASSCPSLDNICVSGCNCPEGPVLDDGGQCVPPGVC) folds into the TIL 2 domain. One can recognise a VWFC 2 domain in the interval 868–926 (CPCQHSSQLYPAGSKIRQGCNACMCTAGTWSCTDAPCPDAAFCPGDLVYVFGSCLRTCD). N931 and N972 each carry an N-linked (GlcNAc...) asparagine glycan. A VWFD 3 domain is found at 998 to 1168 (GTCVATGDPH…NSWRVSLLCP (171 aa)). Disulfide bonds link C1000-C1132, C1022-C1167, and C1043-C1050. The TIL 3 domain occupies 1263 to 1319 (CDGGQEYSACGPPCPQTCRNLGLELPEHCDTMSCLEGCFCPEGKVLHEGSCIDPAEC). N1340 is a glycosylation site (N-linked (GlcNAc...) asparagine). LDL-receptor class A domains are found at residues 1362 to 1398 (HCPD…EVCA), 1400 to 1436 (HCAP…RGCP), 1439 to 1477 (PCAP…AGCS), 1479 to 1515 (SCSV…RGCV), 1515 to 1551 (VCPA…AFCP), and 1555 to 1593 (TCAP…VRCM). 18 disulfide bridges follow: C1363–C1376, C1370–C1389, C1383–C1397, C1401–C1413, C1408–C1426, C1420–C1435, C1440–C1452, C1447–C1465, C1459–C1476, C1480–C1492, C1487–C1505, C1499–C1514, C1516–C1528, C1523–C1541, C1535–C1550, C1556–C1568, C1563–C1581, and C1575–C1592. N1610 carries an N-linked (GlcNAc...) asparagine glycan. 3 LDL-receptor class A domains span residues 1616-1652 (VCGP…LGCN), 1654-1693 (SCVL…DNCG), and 1699-1734 (PCPG…LACE). Cystine bridges form between C1617/C1629, C1624/C1642, and C1636/C1651. N-linked (GlcNAc...) asparagine glycosylation is present at N1652. Disulfide bonds link C1655–C1668, C1662–C1681, C1675–C1692, C1700–C1711, C1706–C1724, and C1718–C1733. An N-linked (GlcNAc...) asparagine glycan is attached at N1713. N-linked (GlcNAc...) asparagine glycosylation occurs at N1743. The LDL-receptor class A 10 domain maps to 1748–1790 (PCAEYSCRDGDCITFKQVCNGLPDCRDGDMASGWLPSDEWDCG). 6 disulfide bridges follow: C1749–C1759, C1754–C1772, C1766–C1789, C1801–C1837, C1805–C1842, and C1816–C1827. TSP type-1 domains are found at residues 1789-1843 (CGQW…TACP) and 1845-1903 (DGAW…DGCP). An N-linked (GlcNAc...) asparagine glycan is attached at N1856. Disulfide bonds link C1857-C1897, C1861-C1902, and C1871-C1881. In terms of domain architecture, TIL 4 spans 1907–1961 (CPGGLQPRPCAPCPASCADLASRAPCRREQCTPGCWCAEGLVLDGERGCVRPREC). EGF-like domains lie at 1919–1956 (CPAS…RGCV) and 1957–1983 (RPRE…CRLC). In terms of domain architecture, VWFC 3 spans 1961 to 2019 (CRCEVDGLRYWPGQRMKLNCRLCTCLDGQPRRCRHNPACSVSCSWSAWSPWGECLGPCG). The TSP type-1 3 domain occupies 2002–2058 (SCSWSAWSPWGECLGPCGVQSIQWSFRSPSHPGKHGTNRQCRGIYRKARRCQTEPCQ). 3 cysteine pairs are disulfide-bonded: C2003-C2042, C2014-C2018, and C2052-C2057. Residues 2058 to 2120 (QECEHQGRSR…GKGDSCCFCA (63 aa)) form the VWFC 4 domain. N-linked (GlcNAc...) asparagine glycans are attached at residues N2125 and N2230. 4 cysteine pairs are disulfide-bonded: C2162–C2310, C2328–C2339, C2335–C2352, and C2346–C2361. In terms of domain architecture, F5/8 type C spans 2162-2310 (CYSPLGIASL…IFLRAELLGC (149 aa)). In terms of domain architecture, LDL-receptor class A 11 spans 2327 to 2362 (PCGTGEFWCGVSCVTASRRCDGATDCPGGADEAGCE). Residues 2352 to 2373 (CPGGADEAGCEPPSSTTLPTHP) are disordered. The span at 2364-2373 (PSSTTLPTHP) shows a compositional bias: polar residues. LDL-receptor class A domains are found at residues 2481 to 2517 (LCPP…AHCG) and 2538 to 2574 (TCSP…SSCA). Cystine bridges form between C2482–C2494, C2489–C2507, C2501–C2516, C2539–C2551, C2546–C2564, C2558–C2573, C2576–C2612, C2587–C2591, C2622–C2627, C2642–C2679, C2646–C2684, and C2657–C2669. TSP type-1 domains are found at residues 2575-2628 (DCIL…RACP) and 2630-2685 (PGAW…QPCG). The TIL 5 domain maps to 2708-2750 (PPCPQVCGDLSATSSCQSPCQEGCRCPPGLFLQEGTCVNASQC). Residue N2746 is glycosylated (N-linked (GlcNAc...) asparagine). 3 consecutive TSP type-1 domains span residues 2790 to 2844 (ACAW…TPCA), 2849 to 2903 (SSGW…APCP), and 2905 to 2958 (AGVW…RPCG). 9 cysteine pairs are disulfide-bonded: C2791–C2829, C2802–C2806, C2839–C2843, C2861–C2897, C2865–C2902, C2881–C2887, C2917–C2952, C2921–C2957, and C2932–C2942. The TIL 6 domain maps to 2971-3020 (EECRHSEGRCPWICQDLGAGVACTAQCQPGCHCPAGLLLQNGTCVPPSHC). N-linked (GlcNAc...) asparagine glycans are attached at residues N3011, N3042, and N3065. A VWFC 5 domain is found at 3020–3077 (CLCHHRGHLYQPGDINALDTCNNCTCVTGQMVCSTETCPVPCTWSNWTAWSTCSHSCD). TSP type-1 domains are found at residues 3060–3115 (PCTW…QPCR) and 3117–3158 (VAPW…APCP). Cystine bridges form between C3061–C3099, C3072–C3076, and C3109–C3114. N-linked (GlcNAc...) asparagine glycosylation is present at N3136. A TIL 7 domain is found at 3165–3217 (CPPGKQWQACAQGAASCAELSAAPPADGSCHPGCYCPPGALLLNNECVAEAAC). Positions 3217–3275 (CPCAVDGVLYQPGDVVPQGCHNCSCIAGRVTNCSQEDCGDVDGPWTPWTPWSECSASCG) constitute a VWFC 6 domain. N-linked (GlcNAc...) asparagine glycosylation is found at N3238 and N3248. One can recognise a TSP type-1 11 domain in the interval 3258 to 3309 (DGPWTPWTPWSECSASCGPGRQRRYRFCSAHPGVPCAEPQPQERPCARQPCH). 3 cysteine pairs are disulfide-bonded: C3270–C3303, C3274–C3308, and C3285–C3293. N-linked (GlcNAc...) asparagine glycans are attached at residues N3350, N3366, and N3392. TSP type-1 domains follow at residues 3410–3475 (PGAW…PPCP) and 3477–3532 (DGAW…SSCP). Cystine bridges form between C3422-C3468, C3426-C3474, C3437-C3449, C3489-C3524, C3492-C3531, and C3502-C3514. A TIL 8 domain is found at 3534-3589 (CAGGLVAFTCGKPCPHSCEDLREDTACMATPRCLPACACPHGQLLQDGDCVPPELC). N3598 and N3625 each carry an N-linked (GlcNAc...) asparagine glycan. TSP type-1 domains follow at residues 3644–3700 (DGGW…EGCP) and 3702–3751 (EEPW…HVCR). Disulfide bonds link C3656–C3693, C3660–C3699, C3671–C3683, C3714–C3745, C3718–C3750, and C3729–C3735. N3823 and N3869 each carry an N-linked (GlcNAc...) asparagine glycan. TSP type-1 domains are found at residues 3878 to 3934 (DGGF…PECP), 3951 to 4004 (EEGF…PLCS), 4018 to 4074 (NCSW…QACK), and 4076 to 4131 (DGAW…QPCD). 6 disulfide bridges follow: C3890–C3928, C3894–C3933, C3906–C3918, C3963–C3998, C3967–C4003, and C3982–C3988. Residues 3932–3951 (ECPAVPTTEPGPGVAGAEEE) are disordered. N-linked (GlcNAc...) asparagine glycosylation is present at N4018. Disulfide bonds link C4019-C4055, C4030-C4034, C4068-C4073, C4088-C4125, C4092-C4130, and C4103-C4115. One can recognise a TIL 9 domain in the interval 4134–4189 (CPPGMALVTCANHCPRHCGDLQEGIVCREEEHCEPGCRCPNGTLEQDGGCVPLAHC). N-linked (GlcNAc...) asparagine glycans are attached at residues N4174 and N4211. TSP type-1 domains are found at residues 4230-4282 (RCPW…GPCP), 4322-4384 (GAEH…RPCP), and 4386-4433 (ECSW…SGCS). 3 cysteine pairs are disulfide-bonded: C4231–C4266, C4242–C4246, and C4276–C4281. N4362 carries N-linked (GlcNAc...) asparagine glycosylation. 3 cysteine pairs are disulfide-bonded: C4387-C4417, C4398-C4400, and C4427-C4432. N-linked (GlcNAc...) asparagine glycosylation is present at N4428. The TIL 10 domain occupies 4437–4492 (CEPPFEFQPCSPPCARLCSTLQHPELCPAQSHCLPGCFCPQGLLEQRSACVPPEQC). N4498 is a glycosylation site (N-linked (GlcNAc...) asparagine). TSP type-1 domains lie at 4537-4608 (LPLS…DICQ) and 4610-4662 (LCLW…AVCP). 6 disulfide bridges follow: C4548–C4601, C4551–C4607, C4575–C4591, C4611–C4646, C4622–C4626, and C4656–C4661. One can recognise a TIL 11 domain in the interval 4675-4722 (TTCANSCPRACADLWQHVECVQGGCKPGCRCPQGQLLQDGLCVPTAQC). N-linked (GlcNAc...) asparagine glycans are attached at residues N4730, N4747, and N4752. 2 TSP type-1 domains span residues 4762-4815 (CPSY…QPCP) and 4817-4869 (GCQL…HNCT). 6 cysteine pairs are disulfide-bonded: C4774/C4809, C4778/C4814, C4789/C4798, C4818/C4852, C4829/C4833, and C4863/C4868. A glycan (N-linked (GlcNAc...) asparagine) is linked at N4867. The TIL 12 domain maps to 4872–4926 (CPRSQVHRECANACPHACADLRPQTQCLPQPCQPGCACPPGQVLQDGACVPPEEC). Residues N4939 and N4970 are each glycosylated (N-linked (GlcNAc...) asparagine). The region spanning 4979–5033 (DCLWSPWSPWSPCSVTCGMGERLSHRHPLRQRLYEGAECLGPPVRRAACHLPDCA) is the TSP type-1 27 domain. 3 disulfides stabilise this stretch: C4980–C5017, C4991–C4995, and C5027–C5032. Residues N5081, N5122, and N5169 are each glycosylated (N-linked (GlcNAc...) asparagine). The region spanning 5092-5150 (CECLHQGQLHQPGSEWQEQCARCRCVDGKANCTDGCTPLSCPEGEVKVREPGRCCPVCR) is the VWFC 7 domain. 4 disulfides stabilise this stretch: C5161–C5209, C5175–C5226, C5185–C5242, and C5189–C5244. The 88-residue stretch at 5161 to 5248 (CRRFTELRNI…IHSCECSSCQ (88 aa)) folds into the CTCK domain.

Belongs to the thrombospondin family.

Its subcellular location is the secreted. The protein resides in the extracellular space. In terms of biological role, involved in the modulation of neuronal aggregation. May be involved in developmental events during the formation of the central nervous system. This chain is SCO-spondin (SSPO), found in Gallus gallus (Chicken).